Reading from the N-terminus, the 38-residue chain is Kunitz-type trypsin inhibitor beta chain (38 aa).

This sequence belongs to the protease inhibitor I3 (leguminous Kunitz-type inhibitor) family. Heterodimer of an alpha and a beta chain linked by a disulfide bond.

In terms of biological role, inhibition of trypsin. This is Kunitz-type trypsin inhibitor beta chain from Neltuma juliflora (Mesquite).